A 187-amino-acid chain; its full sequence is Endoribonuclease YbeY (187 aa).

Residues H151, H155, and H161 each contribute to the Zn(2+) site.

This sequence belongs to the endoribonuclease YbeY family. Requires Zn(2+) as cofactor.

The protein localises to the cytoplasm. Its function is as follows. Single strand-specific metallo-endoribonuclease involved in late-stage 70S ribosome quality control and in maturation of the 3' terminus of the 16S rRNA. In Prochlorococcus marinus (strain MIT 9313), this protein is Endoribonuclease YbeY.